The chain runs to 399 residues: Elongation factor Tu (399 aa).

The region spanning K10–E209 is the tr-type G domain. The G1 stretch occupies residues G19–T26. G19–T26 serves as a coordination point for GTP. T26 contributes to the Mg(2+) binding site. The tract at residues G60–A64 is G2. Positions D81 to G84 are G3. GTP is bound by residues D81 to H85 and N136 to D139. The G4 stretch occupies residues N136 to D139. The interval S174–L176 is G5.

This sequence belongs to the TRAFAC class translation factor GTPase superfamily. Classic translation factor GTPase family. EF-Tu/EF-1A subfamily. As to quaternary structure, monomer.

The protein localises to the cytoplasm. It catalyses the reaction GTP + H2O = GDP + phosphate + H(+). Its function is as follows. GTP hydrolase that promotes the GTP-dependent binding of aminoacyl-tRNA to the A-site of ribosomes during protein biosynthesis. The polypeptide is Elongation factor Tu (Helicobacter pylori (strain G27)).